The chain runs to 100 residues: Urease subunit gamma (100 aa).

It belongs to the urease gamma subunit family. In terms of assembly, heterotrimer of UreA (gamma), UreB (beta) and UreC (alpha) subunits. Three heterotrimers associate to form the active enzyme.

It localises to the cytoplasm. The enzyme catalyses urea + 2 H2O + H(+) = hydrogencarbonate + 2 NH4(+). It participates in nitrogen metabolism; urea degradation; CO(2) and NH(3) from urea (urease route): step 1/1. This Pseudomonas syringae pv. syringae (strain B728a) protein is Urease subunit gamma.